A 199-amino-acid polypeptide reads, in one-letter code: Octanoyltransferase (199 aa).

The region spanning 27-199 (SNSCDELWLL…FVQYFLTQFK (173 aa)) is the BPL/LPL catalytic domain. Residues 66–73 (RGGQVTYH), 133–135 (SIG), and 146–148 (GIA) contribute to the substrate site. Cys-164 (acyl-thioester intermediate) is an active-site residue.

The protein belongs to the LipB family.

The protein resides in the cytoplasm. It catalyses the reaction octanoyl-[ACP] + L-lysyl-[protein] = N(6)-octanoyl-L-lysyl-[protein] + holo-[ACP] + H(+). It functions in the pathway protein modification; protein lipoylation via endogenous pathway; protein N(6)-(lipoyl)lysine from octanoyl-[acyl-carrier-protein]: step 1/2. In terms of biological role, catalyzes the transfer of endogenously produced octanoic acid from octanoyl-acyl-carrier-protein onto the lipoyl domains of lipoate-dependent enzymes. Lipoyl-ACP can also act as a substrate although octanoyl-ACP is likely to be the physiological substrate. In Legionella pneumophila (strain Corby), this protein is Octanoyltransferase.